The chain runs to 332 residues: Putative D-threonate 4-phosphate dehydrogenase (332 aa).

Residues His140 and Thr141 each coordinate substrate. A divalent metal cation-binding residues include His170, His214, and His270. Residues Lys278, Asn287, and Arg296 each contribute to the substrate site.

Belongs to the PdxA family. PdxA2 subfamily. As to quaternary structure, homodimer. It depends on a divalent metal cation as a cofactor.

It carries out the reaction 4-O-phospho-D-threonate + NAD(+) = dihydroxyacetone phosphate + CO2 + NADH. Catalyzes the NAD-dependent oxidation and subsequent decarboxylation of D-threonate 4-phosphate to produce dihydroxyacetone phosphate (DHAP). The polypeptide is Putative D-threonate 4-phosphate dehydrogenase (Oceanobacillus iheyensis (strain DSM 14371 / CIP 107618 / JCM 11309 / KCTC 3954 / HTE831)).